The primary structure comprises 544 residues: MVADFDSGWYEGAGDELGQGARNGVLRERLGGNEKAQVVRSRRKAVAWNVLMVLGLILYVLYSACFAQARQWWRTNGMARGSQAGRFQLVQVHHHGVGAEHATHLVLDVDAEFRKEAAAEYSVFALHGEGQELWPEAGRRRAANPFEYAYALREERATVVRAQQQVPEFMEPYLDFALERPDLAEQIKMDWGYENMFVPNITDKETVISLALMSSNAYVRLPNTGNWRNVTSWNSSVEGDQIHLGWDENGLRAHVFANEDRSVVVLALKGTSSQVLPGSGDDDETSANDKLNDNLLFSCCCARVSYLWTTVCDCYIKSYTCEESCLESELRRKDRYYQAGLDMYKQVLAEFPDASIWLTGHSLGGALASLVARTYGVPAVTFEAPGELLATQRLHLPQPPGLPNQLDTVWHFGHTADPIFMGTCNGASSACSIAGYAMETSCHSGKSCVYDVVNDRGWRVNLLHHRIHTVIDKILDDYDAVAACVPPDICHDCYNWNYVRWRDGTTSPMPSSVASKPTPTPTSPGSPSSTCKGRNWFGYCTEYA.

Over 1-45 (MVADFDSGWYEGAGDELGQGARNGVLRERLGGNEKAQVVRSRRKA) the chain is Cytoplasmic. A helical; Signal-anchor for type II membrane protein membrane pass occupies residues 46–66 (VAWNVLMVLGLILYVLYSACF). Topologically, residues 67 to 544 (AQARQWWRTN…NWFGYCTEYA (478 aa)) are lumenal. Residues Asn200, Asn229, and Asn234 are each glycosylated (N-linked (GlcNAc...) asparagine). Ser362 serves as the catalytic Charge relay system. The interval 508 to 530 (PMPSSVASKPTPTPTSPGSPSST) is disordered.

The protein belongs to the AB hydrolase superfamily. Lipase family. In terms of assembly, binds to both phosphatidylinositol (PI) and phosphatidylinositol 3,5-bisphosphate (PIP2).

The protein resides in the endosome. The protein localises to the multivesicular body membrane. It localises to the prevacuolar compartment membrane. It catalyses the reaction a triacylglycerol + H2O = a diacylglycerol + a fatty acid + H(+). Functionally, lipase which is essential for lysis of subvacuolar cytoplasm to vacuole targeted bodies and intravacuolar autophagic bodies. Involved in the lysis of intravacuolar multivesicular body (MVB) vesicles. The intravacuolar membrane disintegration by ATG15 is critical to life span extension. The polypeptide is Putative lipase ATG15 (ATG15) (Eremothecium gossypii (strain ATCC 10895 / CBS 109.51 / FGSC 9923 / NRRL Y-1056) (Yeast)).